Consider the following 336-residue polypeptide: Phenylalanine--tRNA ligase alpha subunit (336 aa).

E259 is a binding site for Mg(2+).

This sequence belongs to the class-II aminoacyl-tRNA synthetase family. Phe-tRNA synthetase alpha subunit type 1 subfamily. As to quaternary structure, tetramer of two alpha and two beta subunits. Requires Mg(2+) as cofactor.

It is found in the cytoplasm. It carries out the reaction tRNA(Phe) + L-phenylalanine + ATP = L-phenylalanyl-tRNA(Phe) + AMP + diphosphate + H(+). This is Phenylalanine--tRNA ligase alpha subunit from Tropheryma whipplei (strain TW08/27) (Whipple's bacillus).